Here is an 847-residue protein sequence, read N- to C-terminus: Glycogen phosphorylase, liver form (847 aa).

N-acetylalanine is present on Ala2. Ser15 is subject to Phosphoserine; by PHK; in form phosphorylase a. AMP-binding positions include 43–45 (DRN), Tyr76, and Arg310. At Lys364 the chain carries N6-succinyllysine. The residue at position 470 (Lys470) is an N6-acetyllysine. A phosphoserine mark is found at Ser524, Ser561, and Ser639. N6-(pyridoxal phosphate)lysine is present on Lys681. Lys796 is subject to N6-acetyllysine.

It belongs to the glycogen phosphorylase family. Homodimer; enzymatically active. Interacts with PPP1R3B; recruits the phosphatase PP1 which dephosphorylates and inactivates PYGL/glycogen phosphorylase. It depends on pyridoxal 5'-phosphate as a cofactor. Acetylation, which is up-regulated by glucose and insulin and down-regulated by glucagon, inhibits the glycogen phosphorylase activity by promoting PPP1R3B-mediated recruitment of phosphatase PP1 and Ser-15 dephosphorylation. In terms of processing, phosphorylation at Ser-15 converts inactive phosphorylase b into active phosphorylase a. Dephosphorylation of Ser-15 by phosphatase PP1 inactivates the enzyme.

The protein localises to the cytoplasm. The protein resides in the cytosol. The catalysed reaction is [(1-&gt;4)-alpha-D-glucosyl](n) + phosphate = [(1-&gt;4)-alpha-D-glucosyl](n-1) + alpha-D-glucose 1-phosphate. Its activity is regulated as follows. Allosterically regulated through the non-covalent binding of metabolites, being activated by AMP and inhibited by ATP, ADP, and glucose-6-phosphate. The activity is also controlled by post-translational modifications including phosphorylation and acetylation. Allosteric enzyme that catalyzes the rate-limiting step in glycogen catabolism, the phosphorolytic cleavage of glycogen to produce glucose-1-phosphate, and plays a central role in maintaining cellular and organismal glucose homeostasis. The sequence is that of Glycogen phosphorylase, liver form from Homo sapiens (Human).